The primary structure comprises 1027 residues: Kinesin heavy chain isoform 5A (1027 aa).

At Ala2 the chain carries N-acetylalanine. Residues 9–327 (SIKVLCRFRP…LMFGQRAKTI (319 aa)) enclose the Kinesin motor domain. 86-93 (GQTSSGKT) contacts ATP. Residues 174–315 (VSSPEEILDV…PSSYNDAETK (142 aa)) form a microtubule-binding region. The tract at residues 271–361 (EGTKSYVPYR…KTKAQKETIA (91 aa)) is necessary for interaction with ZFYVE27. Positions 331 to 906 (ASVNLELTAE…VDRIKEAVRY (576 aa)) form a coiled coil. The tract at residues 353-1027 (TKAQKETIAK…FPLHQETAAS (675 aa)) is interaction with BICD2. Thr397 is modified (phosphothreonine). The tract at residues 906-937 (YKSSGKRGHSAQIAKPVRPGHYPASSPTNPYG) is disordered. The interval 907–1027 (KSSGKRGHSA…FPLHQETAAS (121 aa)) is globular.

The protein belongs to the TRAFAC class myosin-kinesin ATPase superfamily. Kinesin family. Kinesin subfamily. In terms of assembly, oligomer composed of two heavy chains and two light chains. Interacts with GRIP1. Interacts with FMR1 (via C-terminus); this interaction is increased in a mGluR-dependent manner. Interacts with BORCS5. Interacts with ZFYVE27. Interacts with VAPA, VAPB, SURF4, RAB11A (GDP-bound form), RAB11B (GDP-bound form) and RTN3 in a ZFYVE27-dependent manner. Interacts with BICD2. Interacts with DTNB.

The protein resides in the cytoplasm. Its subcellular location is the perinuclear region. It localises to the cytoskeleton. The protein localises to the perikaryon. The catalysed reaction is ATP + H2O + a kinesin associated with a microtubule at position (n) = ADP + phosphate a kinesin associated with a microtubule at position (n+1, toward the plus end).. Its function is as follows. Microtubule-dependent motor required for slow axonal transport of neurofilament proteins (NFH, NFM and NFL). Can induce formation of neurite-like membrane protrusions in non-neuronal cells in a ZFYVE27-dependent manner. The ZFYVE27-KIF5A complex contributes to the vesicular transport of VAPA, VAPB, SURF4, RAB11A, RAB11B and RTN3 proteins in neurons. Required for anterograde axonal transportation of MAPK8IP3/JIP3 which is essential for MAPK8IP3/JIP3 function in axon elongation. This is Kinesin heavy chain isoform 5A (Kif5a) from Mus musculus (Mouse).